A 157-amino-acid chain; its full sequence is Vitamin K-dependent protein C (157 aa).

Positions 1–157 (ENGEVDLDIQ…GCGRLHNYGV (157 aa)) constitute a Peptidase S1 domain. An N-linked (GlcNAc...) asparagine glycan is attached at asparagine 17. Aspartate 26 acts as the Charge relay system in catalysis. Asparagine 78 is a glycosylation site (N-linked (GlcNAc...) asparagine). 2 disulfides stabilise this stretch: cysteine 96/cysteine 110 and cysteine 121/cysteine 149. Serine 125 functions as the Charge relay system in the catalytic mechanism.

This sequence belongs to the peptidase S1 family. Plasma; synthesized in the liver.

It localises to the secreted. It is found in the golgi apparatus. Its subcellular location is the endoplasmic reticulum. It carries out the reaction Degradation of blood coagulation factors Va and VIIIa.. In terms of biological role, protein C is a vitamin K-dependent serine protease that regulates blood coagulation by inactivating factors Va and VIIIa in the presence of calcium ions and phospholipids. Exerts a protective effect on the endothelial cell barrier function. This Equus caballus (Horse) protein is Vitamin K-dependent protein C (PROC).